A 483-amino-acid polypeptide reads, in one-letter code: Altronate oxidoreductase (483 aa).

18 to 29 serves as a coordination point for NAD(+); sequence IIQFGEGNFLRA.

This sequence belongs to the mannitol dehydrogenase family. UxaB subfamily.

It catalyses the reaction D-altronate + NAD(+) = keto-D-tagaturonate + NADH + H(+). It participates in carbohydrate metabolism; pentose and glucuronate interconversion. This is Altronate oxidoreductase from Yersinia enterocolitica serotype O:8 / biotype 1B (strain NCTC 13174 / 8081).